The chain runs to 808 residues: Beta-catenin/armadillo-related protein 1 (808 aa).

Residues 1 to 85 (MDLDPNLVIN…SSHLSGMSSM (85 aa)) form an involved in transcriptional activation region. ARM repeat units lie at residues 118–160 (RAIP…NETK), 165–209 (CVIF…RAIS), and 369–408 (SDVPSKMKEELLLKSLLELVNSRNAVIRLYSAQTMSNLVA). The tract at residues 541–808 (NVQDVIEGVR…DQYPYRQGRF (268 aa)) is involved in transcriptional activation. Positions 702 to 808 (TYEGAGEQWS…DQYPYRQGRF (107 aa)) are disordered. Polar residues predominate over residues 723 to 736 (YCNSSGRDSSKTYN). A compositionally biased stretch (low complexity) spans 737–750 (SPMYHSPPSMYPEY). A compositionally biased stretch (polar residues) spans 786–798 (NIPSNQGPSSHLS).

Belongs to the beta-catenin family. As to quaternary structure, interacts with apr-1, axl-1, daf-16, lin-23, and pop-1 (via acidic region in N-terminus 1-44). Interacts (via ARM repeats) with pry-1.

The protein localises to the cytoplasm. It localises to the nucleus. It is found in the membrane. The protein resides in the cell junction. Participates in the Wnt signaling pathway which affects cell fate and may regulate the stem cell divisions of seam cells during larval development. Functions as a transcriptional activator but is dependent on the interaction with pop-1. Involved in maintaining lin-39 Hox expression and regulating glr-1 abundance at the synapses. Required for mab-5 expression during Q neuroblast migration and for oxidative stress-induced daf-16 signaling. Has roles in egg laying, vulva precursor cell fate determination, Q neuroblast migration, posterior ectodermal cell P12 specification, movement, body length, male tail development and dauer induction. Functionally redundant to wrm-1 and hmp-2. This is Beta-catenin/armadillo-related protein 1 (bar-1) from Caenorhabditis briggsae.